The primary structure comprises 355 residues: Tabersonine 16-O-methyltransferase (355 aa).

S-adenosyl-L-methionine contacts are provided by residues 198–201 (IGGG), aspartate 222, 222–223 (DL), 242–243 (DM), and lysine 256. Histidine 260 (proton acceptor) is an active-site residue.

The protein belongs to the class I-like SAM-binding methyltransferase superfamily. Cation-independent O-methyltransferase family. COMT subfamily. Homodimer. Expressed in leaves and flowers. Detected in stems and roots. In leaves, expressed in epidermal cells.

Its subcellular location is the cytoplasm. The catalysed reaction is 16-hydroxytabersonine + S-adenosyl-L-methionine = 16-methoxytabersonine + S-adenosyl-L-homocysteine + H(+). It participates in alkaloid biosynthesis; vindoline biosynthesis. In terms of biological role, 16-O-methyltransferase involved in the biosynthesis of vindoline. Highly specific for 16-hydroxytabersonine. No activity with tabersonine, 3-hydroxytyramine, 4-hydroxytyramine, 5-hydroxytryptamine (5HT), 2,3-dihydro-3-hydroxytabersonine, lochnericine, hoerhammericine, 16-hydroxy-2,3-dihydro-3-hydroxytabersonine, 16-hydroxylochnericine, 16-hydroxyhoerhammericine, quercetin, kaempferol and caffeic acid as substrates. This Catharanthus roseus (Madagascar periwinkle) protein is Tabersonine 16-O-methyltransferase.